The following is a 3206-amino-acid chain: Highly reducing polyketide synthase ltbA (3206 aa).

The Ketosynthase family 3 (KS3) domain maps to 5–434 (PAPIAIIGVG…GTNCHVILEA (430 aa)). Catalysis depends on for beta-ketoacyl synthase activity residues C179, H314, and H354. Over residues 441 to 463 (PTGTNGIKTNGTRINGIKTNGAD) the composition is skewed to polar residues. The interval 441-472 (PTGTNGIKTNGTRINGIKTNGADTNERESMKN) is disordered. A malonyl-CoA:ACP transacylase (MAT) domain region spans residues 575–890 (VFSGQGAQWH…EYLSALQRNT (316 aa)). Residues 958-1098 (HDLLGLFDPA…GEITVEYETD (141 aa)) form an N-terminal hotdog fold region. Residues 958–1278 (HDLLGLFDPA…LLVNLRAIGE (321 aa)) are dehydratase (DH) domain. A PKS/mFAS DH domain is found at 958–1284 (HDLLGLFDPA…AIGETREDED (327 aa)). H990 acts as the Proton acceptor; for dehydratase activity in catalysis. A C-terminal hotdog fold region spans residues 1128–1284 (DTDMTKSEFY…AIGETREDED (157 aa)). D1193 serves as the catalytic Proton donor; for dehydratase activity. Residues 1450–1640 (ESGILVGPYE…LARNGFGGIH (191 aa)) are methyltransferase (CMet) domain. The tract at residues 1871–2185 (LLSSLRFVDD…RKHTGKVVLQ (315 aa)) is enoyl reductase (ER) domain. The segment at 2208–2395 (GTYVAAGGLG…SVDAHGALKE (188 aa)) is ketoreductase (KR) domain. Residues 2499-2577 (EEAEQLIRDA…ALAATVASRS (79 aa)) form the Carrier domain. The residue at position 2537 (S2537) is an O-(pantetheine 4'-phosphoryl)serine. The tract at residues 2584–2611 (IRHSSRLQEATTQAENKDAPKNEKEGPS) is disordered. Residues 2598-2610 (ENKDAPKNEKEGP) show a composition bias toward basic and acidic residues. Residues 2994–3206 (HLIPSFGKAV…IKTIIQAGQE (213 aa)) form a carnitine O-acyltransferase (cAT) domain region.

Pantetheine 4'-phosphate serves as cofactor.

It functions in the pathway secondary metabolite biosynthesis. Its function is as follows. Highly reducing polyketide synthase; part of the gene cluster that mediates the biosynthesis of luteodienoside A, a glycosylated polyketide consisting of an unusual 1-O-beta-D-glucopyranosyl-myo-inositol (glucinol) ester of 3-hydroxy-2,2,4-trimethylocta-4,6-dienoic acid. LtbA produces the trimethylated polyketide chain from acetyl-CoA, malonyl-CoA and S-adenosylmethionine (SAM). The ltbA carnitine O-acyltransferase (cAT) domain then uses glucinol produced by the glycosyltransferase ltbB as an offloading substrate to release luteodienoside A. Furthermore, the PKS C-methyltransferase (CMeT) domain is capable of catalysing gem-dimethylation of the 3-hydroxy-2,2,4-trimethylocta-4,6-dienoic acid intermediate, without requiring reversible product release and recapture by the cAT domain. Since ltbA and ltbB are sufficient for the biosynthesis of luteodienoside A, the functions of the methyltransferase ltbC and the FAD-binding monooxygenase ltbD within the pathway remain obscur. This chain is Highly reducing polyketide synthase ltbA, found in Aspergillus luteorubrus.